The primary structure comprises 283 residues: NifU-like protein 4, mitochondrial (283 aa).

The N-terminal 48 residues, 1–48 (MKGIARLVTSLSRIGGRKVVSGTSTVTSSSSSSLLLSRRSLFISATNL), are a transit peptide targeting the mitochondrion.

It belongs to the NifU family. In terms of tissue distribution, predominantly expressed in roots.

Its subcellular location is the mitochondrion. Functionally, molecular scaffold for [Fe-S] cluster assembly of mitochondrial iron-sulfur proteins. The protein is NifU-like protein 4, mitochondrial (NIFU4) of Arabidopsis thaliana (Mouse-ear cress).